Reading from the N-terminus, the 188-residue chain is FMN-dependent NADPH-azoreductase (188 aa).

It belongs to the azoreductase type 2 family. As to quaternary structure, homotetramer. FMN is required as a cofactor.

Its function is as follows. Catalyzes the reductive cleavage of azo bond in aromatic azo compounds to the corresponding amines. Requires NADPH, but not NADH, as an electron donor for its activity. The chain is FMN-dependent NADPH-azoreductase (azo1) from Staphylococcus epidermidis (strain ATCC 12228 / FDA PCI 1200).